A 1133-amino-acid chain; its full sequence is Early transcription factor large subunit homolog (1133 aa).

Residues 52 to 352 form the Helicase ATP-binding domain; the sequence is KGGRAFFPCD…PNGQPLQRQQ (301 aa). 99 to 106 contributes to the ATP binding site; sequence WQTGTGKS. The DEAH box signature appears at 281-284; that stretch reads DEIH. The Helicase C-terminal domain occupies 524 to 724; sequence MMKDILSIIR…EGDKALRKHA (201 aa).

This sequence belongs to the DEAD box helicase family. DEAH subfamily.

Its subcellular location is the virion. The catalysed reaction is ATP + H2O = ADP + phosphate + H(+). In terms of biological role, putative initation factor. This is Early transcription factor large subunit homolog from African swine fever virus (isolate Tick/South Africa/Pretoriuskop Pr4/1996) (ASFV).